Here is a 144-residue protein sequence, read N- to C-terminus: Large ribosomal subunit protein uL13 (144 aa).

It belongs to the universal ribosomal protein uL13 family. Part of the 50S ribosomal subunit.

In terms of biological role, this protein is one of the early assembly proteins of the 50S ribosomal subunit, although it is not seen to bind rRNA by itself. It is important during the early stages of 50S assembly. The protein is Large ribosomal subunit protein uL13 of Lawsonia intracellularis (strain PHE/MN1-00).